The chain runs to 322 residues: Ribose-phosphate pyrophosphokinase (322 aa).

ATP is bound by residues 43–45 (DGE) and 102–103 (RQ). Residues histidine 137 and aspartate 177 each contribute to the Mg(2+) site. Residue lysine 201 is part of the active site. Residues arginine 203, aspartate 227, and 231 to 235 (DTAGT) each bind D-ribose 5-phosphate.

It belongs to the ribose-phosphate pyrophosphokinase family. Class I subfamily. As to quaternary structure, homohexamer. Mg(2+) serves as cofactor.

It is found in the cytoplasm. It catalyses the reaction D-ribose 5-phosphate + ATP = 5-phospho-alpha-D-ribose 1-diphosphate + AMP + H(+). Its pathway is metabolic intermediate biosynthesis; 5-phospho-alpha-D-ribose 1-diphosphate biosynthesis; 5-phospho-alpha-D-ribose 1-diphosphate from D-ribose 5-phosphate (route I): step 1/1. In terms of biological role, involved in the biosynthesis of the central metabolite phospho-alpha-D-ribosyl-1-pyrophosphate (PRPP) via the transfer of pyrophosphoryl group from ATP to 1-hydroxyl of ribose-5-phosphate (Rib-5-P). This is Ribose-phosphate pyrophosphokinase from Xylella fastidiosa (strain 9a5c).